The primary structure comprises 184 residues: Rhox homeobox family member 1 (184 aa).

Residues 26 to 104 form a disordered region; it reads QLGAASSAEG…GPQPENMQPR (79 aa). The segment covering 88-99 has biased composition (low complexity); it reads PAQAAMEGPQPE. Positions 103–162 form a DNA-binding region, homeobox; the sequence is PRTRRTKFTLLQVEELESVFRHTQYPDVPTRRELAENLGVTEDKVRVWFKNKRARCRRHQ. The Nuclear localization signal signature appears at 155–164; sequence RARCRRHQRE.

The protein belongs to the paired-like homeobox family. PEPP subfamily. As to quaternary structure, does not interact with itself. In terms of tissue distribution, ovary, testis and epididymis. Also detected in the prostate and the mammary gland. Expressed in many tumor cell lines derived from acute lymphocytic leukemia, prostate, endometrial adenocarcinoma, melanoma, bladder carcinoma, colon carcinoma, erythroleukemia and breast carcinoma. Not expressed in placenta. In testis, mainly expressed in germ cells, but also detected in somatic cells such as Sertoli cells, Leydig cells and peritubular cells.

The protein resides in the nucleus. Its function is as follows. Transcription factor maybe involved in reproductive processes. Modulates expression of target genes encoding proteins involved in processes relevant to spermatogenesis. The protein is Rhox homeobox family member 1 of Homo sapiens (Human).